Here is a 288-residue protein sequence, read N- to C-terminus: Protein PGR (288 aa).

7 helical membrane passes run 1 to 21 (METSPQFRLIFAVIISSLIAF), 29 to 49 (LDLSGGIAGFLVMTIHFTAGF), 91 to 111 (VLCNSGIASVLVVIACTLTGW), 123 to 143 (IVTALIGGIIGHYACCNGDTW), 177 to 197 (LLAALAAGTTVGLTFLIFGLF), 210 to 230 (LLVIPLSALAGLCGSLIDSIL), and 268 to 288 (VNFVSILLTSFLTSIASVYIF).

It belongs to the TMEM19 family. Expressed in the vasculature of leaves, roots, inflorescences, siliques, anther filaments and sepals. Detected primarily in the phloem tissues, including in the root ans shoot apical meristems.

The protein localises to the cell membrane. Involved in the glucose-triggered developmental leaf growth process. This Arabidopsis thaliana (Mouse-ear cress) protein is Protein PGR.